Consider the following 453-residue polypeptide: Alpha-2B adrenergic receptor (453 aa).

Topologically, residues 1 to 17 (MSGPAMVHQEPYSVQAT) are extracellular. Residues 18 to 42 (AAIASAITFLILFTIFGNALVILAV) form a helical membrane-spanning segment. At 43–54 (LTSRSLRAPQNL) the chain is on the cytoplasmic side. The chain crosses the membrane as a helical span at residues 55–80 (FLVSLAAADILVATLIIPFSLANELL). The Extracellular portion of the chain corresponds to 81–90 (GYWYFWRAWC). A disulfide bridge links cysteine 90 with cysteine 169. A helical transmembrane segment spans residues 91 to 113 (EVYLALDVLFCTSSIVHLCAISL). The Cytoplasmic segment spans residues 114 to 135 (DRYWAVSRALEYNSKRTPRRIK). The helical transmembrane segment at 136 to 158 (CIILTVWLIAAVISLPPLIYKGD) threads the bilayer. Over 159 to 174 (QRPEPHGLPQCELNQE) the chain is Extracellular. A helical membrane pass occupies residues 175 to 198 (AWYILASSIGSFFAPCLIMILVYL). At 199–375 (RIYVIAKRSH…LSREKRFTFV (177 aa)) the chain is on the cytoplasmic side. The tract at residues 214 to 329 (AKRGSGEGES…ASPASVFNPP (116 aa)) is disordered. A compositionally biased stretch (acidic residues) spans 303–314 (AEEDEEEVEECE). Residues 376 to 399 (LAVVIGVFVVCWFPFFFSYSLGAI) form a helical membrane-spanning segment. Residues 400–408 (CPQHCKVPH) lie on the Extracellular side of the membrane. Residues 409 to 432 (GLFQFFFWIGYCNSSLNPVIYTIF) traverse the membrane as a helical segment. Topologically, residues 433–453 (NQDFRRAFRRILCRQWTQTGW) are cytoplasmic. Residue cysteine 445 is the site of S-palmitoyl cysteine attachment.

It belongs to the G-protein coupled receptor 1 family. Adrenergic receptor subfamily. ADRA2B sub-subfamily. Interacts with RAB26. Interacts with PPP1R9B. Interacts with GGA1, GGA2 and GGA3.

Its subcellular location is the cell membrane. Functionally, alpha-2 adrenergic receptors mediate the catecholamine-induced inhibition of adenylate cyclase through the action of G proteins. In Mus musculus (Mouse), this protein is Alpha-2B adrenergic receptor (Adra2b).